A 259-amino-acid chain; its full sequence is MTMYNIQDHVVIITGSSSGIGLAASTLALASGAKVLGIDISNSPASLTANPNYTFFAADLSHPESAKKAIAACIAAYGNRIDGLLNIAGVMDLNQSADTVTDDMWDRCIAINLTAPVKLMREVIPIMRLRGKGSIVNVGSKASMSGAVSGVAYTASKHGLVGATKNVAWRFKHEGIRCNIVCPGGVAATGIRDGVDSTQFDSEAMEMMTVIHQAHASDHAKGLGLQPEDLAHSLLYFLSDLSKGISGAVIPVDNAWSTI.

Ile13, Asp59, Arg121, Tyr153, Lys157, and Val186 together coordinate NADP(+). The active-site Proton acceptor is Tyr153. Tyr153 acts as the Proton donor in catalysis. Catalysis depends on Lys157, which acts as the Lowers pKa of active site Tyr.

This sequence belongs to the short-chain dehydrogenases/reductases (SDR) family.

It functions in the pathway secondary metabolite biosynthesis; terpenoid biosynthesis. In terms of biological role, short chain dehydrogenase; part of the gene cluster A that mediates the biosynthesis of the fungal meroterpenoid acetoxydehydroaustin. The first step of the pathway is the synthesis of 3,5-dimethylorsellinic acid by the polyketide synthase ausA. 3,5-dimethylorsellinic acid is then prenylated by the polyprenyl transferase ausN. Further epoxidation by the FAD-dependent monooxygenase ausM and cyclization by the probable terpene cyclase ausL lead to the formation of protoaustinoid A. Protoaustinoid A is then oxidized to spiro-lactone preaustinoid A3 by the combined action of the FAD-binding monooxygenases ausB and ausC, and the dioxygenase ausE. Acid-catalyzed keto-rearrangement and ring contraction of the tetraketide portion of preaustinoid A3 by ausJ lead to the formation of preaustinoid A4. The aldo-keto reductase ausK, with the help of ausH, is involved in the next step by transforming preaustinoid A4 into isoaustinone which is in turn hydroxylated by the P450 monooxygenase ausI to form austinolide. The cytochrome P450 monooxygenase ausG then modifies austinolide to austinol. Austinol is further acetylated to austin by the O-acetyltransferase ausP, which spontaneously changes to dehydroaustin. The cytochrome P450 monooxygenase then converts dehydroaustin is into 7-dehydrodehydroaustin. The hydroxylation catalyzed by ausR permits the second O-acetyltransferase ausQ to add an additional acetyl group to the molecule, leading to the formation of acetoxydehydroaustin. Due to genetic rearrangements of the clusters and the subsequent loss of some enzymes, the end product of the Penicillium brasilianum austinoid biosynthesis clusters is acetoxydehydroaustin. The chain is Short chain dehydrogenase ausX from Penicillium brasilianum.